We begin with the raw amino-acid sequence, 150 residues long: Transcriptional regulator MraZ (150 aa).

SpoVT-AbrB domains are found at residues 6–52 (EFFN…PYQE) and 80–126 (AVEC…NRTK).

Belongs to the MraZ family. Forms oligomers.

The protein resides in the cytoplasm. Its subcellular location is the nucleoid. The chain is Transcriptional regulator MraZ from Syntrophotalea carbinolica (strain DSM 2380 / NBRC 103641 / GraBd1) (Pelobacter carbinolicus).